We begin with the raw amino-acid sequence, 184 residues long: HVA22-like protein c (184 aa).

The next 3 membrane-spanning stretches (helical) occupy residues 13–33 (VLIK…YPLY), 51–71 (LTYW…SKPL), and 73–93 (WFPI…LPQF).

Belongs to the DP1 family. As to expression, predominantly expressed in flower buds and stem.

Its subcellular location is the membrane. The chain is HVA22-like protein c (HVA22C) from Arabidopsis thaliana (Mouse-ear cress).